Here is a 353-residue protein sequence, read N- to C-terminus: Phospho-N-acetylmuramoyl-pentapeptide-transferase (353 aa).

A run of 10 helical transmembrane segments spans residues Leu24–Ala44, Thr66–Ala86, Leu88–Phe108, Phe129–Asp149, Pro160–Ala180, Gly192–Ala212, Val229–Tyr249, Val256–Val276, Ile281–Val301, and Lys330–Leu350.

It belongs to the glycosyltransferase 4 family. MraY subfamily. It depends on Mg(2+) as a cofactor.

Its subcellular location is the cell inner membrane. The catalysed reaction is UDP-N-acetyl-alpha-D-muramoyl-L-alanyl-gamma-D-glutamyl-meso-2,6-diaminopimeloyl-D-alanyl-D-alanine + di-trans,octa-cis-undecaprenyl phosphate = di-trans,octa-cis-undecaprenyl diphospho-N-acetyl-alpha-D-muramoyl-L-alanyl-D-glutamyl-meso-2,6-diaminopimeloyl-D-alanyl-D-alanine + UMP. Its pathway is cell wall biogenesis; peptidoglycan biosynthesis. Functionally, catalyzes the initial step of the lipid cycle reactions in the biosynthesis of the cell wall peptidoglycan: transfers peptidoglycan precursor phospho-MurNAc-pentapeptide from UDP-MurNAc-pentapeptide onto the lipid carrier undecaprenyl phosphate, yielding undecaprenyl-pyrophosphoryl-MurNAc-pentapeptide, known as lipid I. This Helicobacter acinonychis (strain Sheeba) protein is Phospho-N-acetylmuramoyl-pentapeptide-transferase.